The following is a 165-amino-acid chain: Regulator of ribonuclease activity A (165 aa).

The protein belongs to the RraA family. In terms of assembly, homotrimer. Binds to both RNA-binding sites in the C-terminal region of Rne and to RhlB.

The protein resides in the cytoplasm. Its function is as follows. Globally modulates RNA abundance by binding to RNase E (Rne) and regulating its endonucleolytic activity. Can modulate Rne action in a substrate-dependent manner by altering the composition of the degradosome. Modulates RNA-binding and helicase activities of the degradosome. The protein is Regulator of ribonuclease activity A of Pseudoalteromonas translucida (strain TAC 125).